We begin with the raw amino-acid sequence, 327 residues long: Ornithine carbamoyltransferase 2, anabolic (327 aa).

Carbamoyl phosphate contacts are provided by residues Arg-109 and 136-139 (HPTQ). L-ornithine contacts are provided by residues Asn-168, Asp-232, and 236–237 (SM). Residues 273-274 (CL) and Arg-313 each bind carbamoyl phosphate.

It belongs to the aspartate/ornithine carbamoyltransferase superfamily. OTCase family. As to quaternary structure, homotrimer.

It localises to the cytoplasm. The catalysed reaction is carbamoyl phosphate + L-ornithine = L-citrulline + phosphate + H(+). The protein operates within amino-acid biosynthesis; L-arginine biosynthesis; L-arginine from L-ornithine and carbamoyl phosphate: step 1/3. In terms of biological role, plays an important role in the survival and pathogenicity of P.syringae. Phaseolotoxin is a virulence factor that inhibits the catalysis of the host OTCase. Phaseolotoxin-producing bacteria do not suffer autointoxication because they possess the anabolic OTCase ArgK which can function even in the presence of phaseolotoxin. Reversibly catalyzes the transfer of the carbamoyl group from carbamoyl phosphate (CP) to the N(epsilon) atom of ornithine (ORN) to produce L-citrulline, which is a substrate for argininosuccinate synthetase, the enzyme involved in the final step in arginine biosynthesis. The protein is Ornithine carbamoyltransferase 2, anabolic of Pseudomonas savastanoi pv. phaseolicola (Pseudomonas syringae pv. phaseolicola).